A 466-amino-acid chain; its full sequence is Cytochrome P450 85A1 (466 aa).

Residues M1–L21 traverse the membrane as a helical segment. Residue C416 coordinates heme.

It belongs to the cytochrome P450 family. The cofactor is heme.

The protein resides in the membrane. The catalysed reaction is 6-deoxoteasterone + reduced [NADPH--hemoprotein reductase] + O2 = 6alpha-hydroxyteasterone + oxidized [NADPH--hemoprotein reductase] + H2O + H(+). It catalyses the reaction 6alpha-hydroxytyphasterol + reduced [NADPH--hemoprotein reductase] + O2 = teasterone + oxidized [NADPH--hemoprotein reductase] + 2 H2O + H(+). The enzyme catalyses 3-dehydro-6-deoxoteasterone + reduced [NADPH--hemoprotein reductase] + O2 = 3-dehydro-6alpha-hydroxyteasterone + oxidized [NADPH--hemoprotein reductase] + H2O + H(+). It carries out the reaction 3-dehydro-6alpha-hydroxyteasterone + reduced [NADPH--hemoprotein reductase] + O2 = 3-dehydroteasterone + oxidized [NADPH--hemoprotein reductase] + 2 H2O + H(+). The catalysed reaction is 6-deoxotyphasterol + reduced [NADPH--hemoprotein reductase] + O2 = 6alpha-hydroxytyphasterol + oxidized [NADPH--hemoprotein reductase] + H2O + H(+). It catalyses the reaction 6alpha-hydroxytyphasterol + reduced [NADPH--hemoprotein reductase] + O2 = typhasterol + oxidized [NADPH--hemoprotein reductase] + 2 H2O + H(+). The enzyme catalyses 6-deoxocastasterone + reduced [NADPH--hemoprotein reductase] + O2 = 6alpha-hydroxycastasterone + oxidized [NADPH--hemoprotein reductase] + H2O + H(+). It carries out the reaction 6alpha-hydroxycastasterone + reduced [NADPH--hemoprotein reductase] + O2 = castasterone + oxidized [NADPH--hemoprotein reductase] + 2 H2O + H(+). The catalysed reaction is 3-dehydro-6-deoxoteasterone + 2 reduced [NADPH--hemoprotein reductase] + 2 O2 = 3-dehydroteasterone + 2 oxidized [NADPH--hemoprotein reductase] + 3 H2O + 2 H(+). It catalyses the reaction 6-deoxocastasterone + 2 reduced [NADPH--hemoprotein reductase] + 2 O2 = castasterone + 2 oxidized [NADPH--hemoprotein reductase] + 3 H2O + 2 H(+). The enzyme catalyses 6-deoxoteasterone + 2 reduced [NADPH--hemoprotein reductase] + 2 O2 = teasterone + 2 oxidized [NADPH--hemoprotein reductase] + 3 H2O + 2 H(+). It carries out the reaction 6-deoxotyphasterol + 2 reduced [NADPH--hemoprotein reductase] + 2 O2 = typhasterol + 2 oxidized [NADPH--hemoprotein reductase] + 3 H2O + 2 H(+). It participates in plant hormone biosynthesis; brassinosteroid biosynthesis. In terms of biological role, involved in reduction steps of the biosynthesis of plant campesterol-derivative steroids, ending to castasterone (CS) but missing brassinolide (BL). Catalyzes the C6-oxidation step in brassinosteroids biosynthesis; the conversion of 6-deoxoteasterone (6-deoxoTE) to teasterone (TE), 3-dehydro-6-deoxoteasterone (6-deoxo3DT, 6-deoxo-3-DHT) to 3-dehydroteasterone (3DT, 3-DHT), 6-deoxotyphasterol (6-deoxoTY) to typhasterol (TY) and of 6-deoxocastasterone (6-deoxoCS) to castasterone (CS). The sequence is that of Cytochrome P450 85A1 from Brachypodium distachyon (Purple false brome).